The primary structure comprises 217 residues: MTPRIWELVGLSTLETLYMGFIATLFAIVIGLPIGLLAFLTGKGEILENRRANQVLNVIINIGRSVPFIILLIILLPFTRLVVGTTLGTTAAIVPLSVSAIPFFARLTANALLEIPSGLTEAAKSMGATNWQIVTKYYLPESIPILINGITLTLVALIGYSAMAGAVGGGGLGNLAITYGEHRNMIYVKWIATIIIVLIVMLSQKLGDHLAERFDHR.

Residues 13-207 (TLETLYMGFI…LIVMLSQKLG (195 aa)) form the ABC transmembrane type-1 domain. A run of 5 helical transmembrane segments spans residues 20-40 (GFIA…LAFL), 58-78 (VIIN…LLPF), 81-101 (LVVG…VSAI), 143-163 (IPIL…YSAM), and 184-204 (NMIY…MLSQ).

The protein belongs to the binding-protein-dependent transport system permease family. CysTW subfamily.

The protein resides in the cell inner membrane. In terms of biological role, part of the binding-protein-dependent transport system for D-methionine. Probably responsible for the translocation of the substrate across the membrane. The sequence is that of Probable D-methionine transport system permease protein MetI (metI) from Pasteurella multocida (strain Pm70).